The following is a 113-amino-acid chain: Molt-inhibiting hormone (113 aa).

The first 35 residues, 1 to 35 (MMSRTESRYSSQRTWLLSMVVLAALWSISVQRATA), serve as a signal peptide directing secretion. Cystine bridges form between cysteine 42-cysteine 79, cysteine 59-cysteine 75, and cysteine 62-cysteine 88.

The protein belongs to the arthropod CHH/MIH/GIH/VIH hormone family.

Its subcellular location is the secreted. Functionally, inhibits Y-organs where molting hormone (ecdysteroid) is secreted. A molting cycle is initiated when MIH secretion diminishes or stops. The polypeptide is Molt-inhibiting hormone (Metacarcinus magister (Dungeness crab)).